The following is a 683-amino-acid chain: Methionine--tRNA ligase (683 aa).

The short motif at 15–25 is the 'HIGH' region element; that stretch reads PYANGSIHLGH. Positions 146, 149, 159, and 162 each coordinate Zn(2+). Residues 332–336 carry the 'KMSKS' region motif; sequence KMSKS. K335 contributes to the ATP binding site. The region spanning 582 to 683 is the tRNA-binding domain; the sequence is DFAKVDLRIA…QGAQAGMRVM (102 aa).

The protein belongs to the class-I aminoacyl-tRNA synthetase family. MetG type 1 subfamily. In terms of assembly, homodimer. Requires Zn(2+) as cofactor.

It is found in the cytoplasm. It carries out the reaction tRNA(Met) + L-methionine + ATP = L-methionyl-tRNA(Met) + AMP + diphosphate. Is required not only for elongation of protein synthesis but also for the initiation of all mRNA translation through initiator tRNA(fMet) aminoacylation. The protein is Methionine--tRNA ligase of Vibrio cholerae serotype O1 (strain ATCC 39315 / El Tor Inaba N16961).